Reading from the N-terminus, the 541-residue chain is Major facilitator-type transporter ecdD (541 aa).

A helical membrane pass occupies residues 15–35 (AWPAILISGFVAFGGILFGYD). The N-linked (GlcNAc...) asparagine glycan is linked to Asn64. 4 helical membrane-spanning segments follow: residues 72-92 (AIVS…SPMG), 106-126 (GIFV…PFLA), 129-149 (FFAG…QSET), and 156-176 (GFIV…ASVL). N-linked (GlcNAc...) asparagine glycans are attached at residues Asn178 and Asn184. A helical membrane pass occupies residues 191–211 (IPIAVQFAWSIILVGGMLILP). Residue Asn253 is glycosylated (N-linked (GlcNAc...) asparagine). Helical transmembrane passes span 277–297 (LVTG…FIMY), 313–333 (VITL…LYAI), 340–360 (PVLL…AVLG), 384–404 (IAFI…SAWV), 418–440 (SLSM…TPYL), and 454–474 (IFFI…FMIY).

The protein belongs to the major facilitator superfamily. Sugar transporter (TC 2.A.1.1) family.

The protein resides in the membrane. This Aspergillus rugulosus (Emericella rugulosa) protein is Major facilitator-type transporter ecdD.